The primary structure comprises 230 residues: Uracil-DNA glycosylase (230 aa).

The Proton acceptor role is filled by Asp-65.

This sequence belongs to the uracil-DNA glycosylase (UDG) superfamily. UNG family.

Its subcellular location is the cytoplasm. It carries out the reaction Hydrolyzes single-stranded DNA or mismatched double-stranded DNA and polynucleotides, releasing free uracil.. Functionally, excises uracil residues from the DNA which can arise as a result of misincorporation of dUMP residues by DNA polymerase or due to deamination of cytosine. The polypeptide is Uracil-DNA glycosylase (Lactiplantibacillus plantarum (strain ATCC BAA-793 / NCIMB 8826 / WCFS1) (Lactobacillus plantarum)).